A 329-amino-acid chain; its full sequence is Probable nicotianamine synthase 4 (329 aa).

This sequence belongs to the nicotianamine synthase (NAS)-like family.

It catalyses the reaction 3 S-adenosyl-L-methionine = nicotianamine + 3 S-methyl-5'-thioadenosine + 3 H(+). Its function is as follows. Synthesizes nicotianamine, a polyamine that is the first intermediate in the synthesis of the phytosiderophores of the mugineic acid type found in gramineae which serves as a sensor for the physiological iron status within the plant, and/or might be involved in the transport of iron. The polypeptide is Probable nicotianamine synthase 4 (NAS4) (Hordeum vulgare (Barley)).